A 500-amino-acid polypeptide reads, in one-letter code: Aromatic-L-amino-acid decarboxylase (500 aa).

L-tryptophan is bound at residue Pro102. Ser168 is a pyridoxal 5'-phosphate binding site. Residue His203 participates in L-tryptophan binding. A pyridoxal 5'-phosphate-binding site is contributed by Thr262. Residue His318 coordinates L-tryptophan. Lys319 bears the N6-(pyridoxal phosphate)lysine mark. Position 348 (Tyr348) interacts with L-tryptophan.

The protein belongs to the group II decarboxylase family. Homodimer. The cofactor is pyridoxal 5'-phosphate.

The catalysed reaction is L-tryptophan + H(+) = tryptamine + CO2. It catalyses the reaction 5-hydroxy-L-tryptophan + H(+) = serotonin + CO2. Functionally, catalyzes the decarboxylation of L-tryptophan to tryptamine and L-5-hydroxytryptophan to serotonin, respectively. The sequence is that of Aromatic-L-amino-acid decarboxylase from Catharanthus roseus (Madagascar periwinkle).